Reading from the N-terminus, the 601-residue chain is Aspartate--tRNA(Asp/Asn) ligase (601 aa).

Glutamate 173 contributes to the L-aspartate binding site. An aspartate region spans residues 197–200 (QLFK). Position 219 (arginine 219) interacts with L-aspartate. Residues 219–221 (RDE) and glutamine 228 contribute to the ATP site. Histidine 456 is an L-aspartate binding site. Residue glutamate 490 coordinates ATP. An L-aspartate-binding site is contributed by arginine 497. 542–545 (GWDR) serves as a coordination point for ATP. A disordered region spans residues 566–601 (GGGYDPLTQAPAPITAEQRRESGVDAVPDDETAPQA). Acidic residues predominate over residues 592–601 (VPDDETAPQA).

This sequence belongs to the class-II aminoacyl-tRNA synthetase family. Type 1 subfamily. As to quaternary structure, homodimer.

Its subcellular location is the cytoplasm. The catalysed reaction is tRNA(Asx) + L-aspartate + ATP = L-aspartyl-tRNA(Asx) + AMP + diphosphate. Aspartyl-tRNA synthetase with relaxed tRNA specificity since it is able to aspartylate not only its cognate tRNA(Asp) but also tRNA(Asn). Reaction proceeds in two steps: L-aspartate is first activated by ATP to form Asp-AMP and then transferred to the acceptor end of tRNA(Asp/Asn). This Beutenbergia cavernae (strain ATCC BAA-8 / DSM 12333 / CCUG 43141 / JCM 11478 / NBRC 16432 / NCIMB 13614 / HKI 0122) protein is Aspartate--tRNA(Asp/Asn) ligase.